The sequence spans 271 residues: Aquaporin-11 (271 aa).

The Cytoplasmic segment spans residues 1 to 14 (MSALLGLRPEVQDT). The chain crosses the membrane as a helical span at residues 15–35 (CISLGLMLLFVLFVGLARVIA). Over 36–41 (RQQLHR) the chain is Lumenal. The helical transmembrane segment at 42-62 (PVVHAFVLEFLATFQLCCCTH) threads the bilayer. The Cytoplasmic segment spans residues 63–76 (ELQVLSEQDSAHPT). Residues 77–97 (WTLTLIYFFSLVHGLTLVGTA) traverse the membrane as a helical segment. Residues 98–166 (SNPCGVMMQM…NPIHTDMSKA (69 aa)) are Lumenal-facing. Residues 99-101 (NPC) carry the NPC motif. The helical transmembrane segment at 167–187 (IIIEAICSFIFHSALLHFQEV) threads the bilayer. The Cytoplasmic segment spans residues 188-194 (RTKLRIH). The chain crosses the membrane as a helical span at residues 195–215 (LLAALITFLAYAGGSLTGALF). The short motif at 216 to 218 (NPA) is the NPA element. Topologically, residues 216 to 234 (NPALALSLHFPCFDELFYK) are lumenal. The helical transmembrane segment at 235 to 255 (FFVVYWLAPSVGVLMMILMFS) threads the bilayer. Over 256 to 271 (FFLPWLHNNQMTNKKE) the chain is Cytoplasmic.

Belongs to the MIP/aquaporin (TC 1.A.8) family. AQP11/AQP12 subfamily. In terms of assembly, homodimer; disulfide-linked. Homotetramer. Can also form homomultimer. Not glycosylated. In terms of tissue distribution, highly expressed in the S1 proximal tubule segment,. Expressed in the testis, kidney, and liver. Weakly expressed in the heart, brain, and muscle. Highly expressed in the testis. Expressed in the proximal tubule of the cortex of 8-day-old mouse kidney. Expressed in retina specifically at retinal Mueller glial cells. Expressed in brain. Expressed abundantly at the choroid plexus but also expressed weakly in the parenchyma. Expressed at the capillary endothelium in the cerebral white matter. Expressed in adult testis, in the elongated spermatids (ES) and in residual bodies inside Sertoli cells.

It is found in the endoplasmic reticulum membrane. Its subcellular location is the cytoplasmic vesicle membrane. The protein localises to the cell membrane. It catalyses the reaction H2O(in) = H2O(out). The enzyme catalyses glycerol(in) = glycerol(out). It carries out the reaction H2O2(out) = H2O2(in). In terms of biological role, channel protein that facilitates the transport of water, glycerol and hydrogen peroxide across membrane of cell or organelles guaranteeing intracellular homeostasis in several organes like liver, kidney and brain. In situation of stress, participates in endoplasmic reticulum (ER) homeostasis by regulating redox homeostasis through the transport of hydrogen peroxide across the endoplasmic reticulum membrane thereby regulating the oxidative stress through the NADPH oxidase 2 pathway. Plays a role by maintaining an environment suitable for translation or protein foldings in the ER lumen namely by participating in the PKD1 glycosylation processing resulting in regulation of PKD1 membrane trafficking thereby preventing the accumulation of unfolding protein in ER. Plays a role in the proximal tubule function by regulating its endosomal acidification. May play a role in postnatal kidney development. This chain is Aquaporin-11, found in Mus musculus (Mouse).